The primary structure comprises 72 residues: Translation initiation factor IF-1 (72 aa).

One can recognise an S1-like domain in the interval 1-72; the sequence is MPKDDSIEVE…TRGRITYRAK (72 aa).

This sequence belongs to the IF-1 family. Component of the 30S ribosomal translation pre-initiation complex which assembles on the 30S ribosome in the order IF-2 and IF-3, IF-1 and N-formylmethionyl-tRNA(fMet); mRNA recruitment can occur at any time during PIC assembly.

It is found in the cytoplasm. Functionally, one of the essential components for the initiation of protein synthesis. Stabilizes the binding of IF-2 and IF-3 on the 30S subunit to which N-formylmethionyl-tRNA(fMet) subsequently binds. Helps modulate mRNA selection, yielding the 30S pre-initiation complex (PIC). Upon addition of the 50S ribosomal subunit IF-1, IF-2 and IF-3 are released leaving the mature 70S translation initiation complex. The sequence is that of Translation initiation factor IF-1 from Myxococcus xanthus (strain DK1622).